Here is a 77-residue protein sequence, read N- to C-terminus: NAD(P)H-quinone oxidoreductase subunit L (77 aa).

2 helical membrane passes run 12–32 and 47–67; these read FVAY…ILFY and LGVY…SPFL.

This sequence belongs to the complex I NdhL subunit family. NDH-1 can be composed of about 15 different subunits; different subcomplexes with different compositions have been identified which probably have different functions.

The protein localises to the cellular thylakoid membrane. It carries out the reaction a plastoquinone + NADH + (n+1) H(+)(in) = a plastoquinol + NAD(+) + n H(+)(out). The catalysed reaction is a plastoquinone + NADPH + (n+1) H(+)(in) = a plastoquinol + NADP(+) + n H(+)(out). Functionally, NDH-1 shuttles electrons from an unknown electron donor, via FMN and iron-sulfur (Fe-S) centers, to quinones in the respiratory and/or the photosynthetic chain. The immediate electron acceptor for the enzyme in this species is believed to be plastoquinone. Couples the redox reaction to proton translocation, and thus conserves the redox energy in a proton gradient. Cyanobacterial NDH-1 also plays a role in inorganic carbon-concentration. The sequence is that of NAD(P)H-quinone oxidoreductase subunit L from Prochlorococcus marinus (strain MIT 9515).